We begin with the raw amino-acid sequence, 433 residues long: Serine hydroxymethyltransferase (433 aa).

Residues Leu121 and Gly125–Ile127 contribute to the (6S)-5,6,7,8-tetrahydrofolate site. At Lys231 the chain carries N6-(pyridoxal phosphate)lysine.

It belongs to the SHMT family. In terms of assembly, homodimer. Pyridoxal 5'-phosphate serves as cofactor.

The protein localises to the cytoplasm. Its pathway is amino-acid biosynthesis; glycine biosynthesis; glycine from L-serine: step 1/1. Functionally, catalyzes the reversible interconversion of serine and glycine with a modified folate serving as the one-carbon carrier. Also exhibits a pteridine-independent aldolase activity toward beta-hydroxyamino acids, producing glycine and aldehydes, via a retro-aldol mechanism. This is Serine hydroxymethyltransferase from Picrophilus torridus (strain ATCC 700027 / DSM 9790 / JCM 10055 / NBRC 100828 / KAW 2/3).